Reading from the N-terminus, the 208-residue chain is Dephospho-CoA kinase (208 aa).

The DPCK domain occupies 8–208 (LVGVTGGIGS…VYQSLLTVVE (201 aa)). 16-21 (GSGKST) serves as a coordination point for ATP.

It belongs to the CoaE family.

The protein localises to the cytoplasm. The catalysed reaction is 3'-dephospho-CoA + ATP = ADP + CoA + H(+). It functions in the pathway cofactor biosynthesis; coenzyme A biosynthesis; CoA from (R)-pantothenate: step 5/5. Its function is as follows. Catalyzes the phosphorylation of the 3'-hydroxyl group of dephosphocoenzyme A to form coenzyme A. The sequence is that of Dephospho-CoA kinase from Chlorobaculum tepidum (strain ATCC 49652 / DSM 12025 / NBRC 103806 / TLS) (Chlorobium tepidum).